Consider the following 99-residue polypeptide: MALTLTDVKRIAHLARLELADAEAEHTLVQLNDFFGLVEQMQAVDTTGIAPLAHPIEQIEDVALRLRDDTVTETVEREAFQRPAPAVQDGLYLVPKVIE.

It belongs to the GatC family. In terms of assembly, heterotrimer of A, B and C subunits.

The catalysed reaction is L-glutamyl-tRNA(Gln) + L-glutamine + ATP + H2O = L-glutaminyl-tRNA(Gln) + L-glutamate + ADP + phosphate + H(+). It catalyses the reaction L-aspartyl-tRNA(Asn) + L-glutamine + ATP + H2O = L-asparaginyl-tRNA(Asn) + L-glutamate + ADP + phosphate + 2 H(+). Its function is as follows. Allows the formation of correctly charged Asn-tRNA(Asn) or Gln-tRNA(Gln) through the transamidation of misacylated Asp-tRNA(Asn) or Glu-tRNA(Gln) in organisms which lack either or both of asparaginyl-tRNA or glutaminyl-tRNA synthetases. The reaction takes place in the presence of glutamine and ATP through an activated phospho-Asp-tRNA(Asn) or phospho-Glu-tRNA(Gln). This Paraburkholderia xenovorans (strain LB400) protein is Aspartyl/glutamyl-tRNA(Asn/Gln) amidotransferase subunit C.